We begin with the raw amino-acid sequence, 255 residues long: MVEDFAGDAMTLSIAQITDLHLLVDPQAALRGCVTTPRAAAVFGNLKQRSPDLLLLSGDLSEDGSPASYERLRDWVEELGCPAIAIAGNHDQPERLTEICGRSPFMGEPVYSIQGWRIIALDSYQPKRIDGRLRGDQLDWLDQRLGEDSSPTLLMLHHPPVLIGVTKMDAIGLKDGPEFLEVIAHHQQVRLVLSGHAHQAFIQGRGLTTFLGCPATAMQFDQPELPAGWRSLELEPDGSWRSQIHWVDTDSIHFA.

Fe cation-binding residues include D19, H21, D59, N89, H157, H196, and H198. AMP is bound by residues H21, D59, and 89–90; that span reads NH. An AMP-binding site is contributed by H198.

It belongs to the cyclic nucleotide phosphodiesterase class-III family. Fe(2+) serves as cofactor.

The protein is Probable cyclic nucleotide phosphodiesterase syc0937_d of Synechococcus sp. (strain ATCC 27144 / PCC 6301 / SAUG 1402/1) (Anacystis nidulans).